A 187-amino-acid polypeptide reads, in one-letter code: Cell division protein SepF (187 aa).

The segment at 21–97 (EVEVPDKQQQ…ATPNNASQES (77 aa)) is disordered. Composition is skewed to polar residues over residues 38–63 (EQSQQTTKQNAIKSVPQKSASRYTTT) and 70–97 (RMSNYSKNNSRNVVTMNNATPNNASQES).

This sequence belongs to the SepF family. As to quaternary structure, homodimer. Interacts with FtsZ.

It localises to the cytoplasm. Cell division protein that is part of the divisome complex and is recruited early to the Z-ring. Probably stimulates Z-ring formation, perhaps through the cross-linking of FtsZ protofilaments. Its function overlaps with FtsA. The protein is Cell division protein SepF of Staphylococcus aureus (strain MRSA252).